We begin with the raw amino-acid sequence, 854 residues long: DNA mismatch repair protein MutS (854 aa).

614–621 contributes to the ATP binding site; sequence GPNMGGKS.

The protein belongs to the DNA mismatch repair MutS family.

Functionally, this protein is involved in the repair of mismatches in DNA. It is possible that it carries out the mismatch recognition step. This protein has a weak ATPase activity. In Yersinia pestis bv. Antiqua (strain Antiqua), this protein is DNA mismatch repair protein MutS.